The primary structure comprises 496 residues: MFS transporter cpaT (496 aa).

The disordered stretch occupies residues 1–45 (MGHQEEPPRICKTPSGHEQGEGPAEKTSKPSTEEVGWDGPTDPAR). Residues 18–32 (EQGEGPAEKTSKPST) show a composition bias toward basic and acidic residues. A glycan (N-linked (GlcNAc...) asparagine) is linked at asparagine 48. The helical transmembrane segment at 58-78 (MGIISYLTFLTPLTSSIVAPA) threads the bilayer. Asparagine 90 carries N-linked (GlcNAc...) asparagine glycosylation. Transmembrane regions (helical) follow at residues 93-113 (LASF…LFLA), 130-150 (FIFT…ALLV), 154-174 (FAGI…ADMF), 180-200 (GVAM…GPIA), and 212-232 (WVFW…LFVL). The N-linked (GlcNAc...) asparagine glycan is linked to asparagine 252. 6 helical membrane-spanning segments follow: residues 288–308 (VALF…LFTT), 325–345 (GLVY…FGAL), 367–387 (LPPL…YGWS), 395–415 (IMPI…LLPI), 427–449 (AASA…PLAG), and 463–483 (SLLG…YFYG).

Belongs to the major facilitator superfamily.

The protein resides in the membrane. In terms of biological role, MFS transporter; part of the gene cluster that mediates the biosynthesis of the fungal neurotoxin cyclopiazonic acid (CPA), a nanomolar inhibitor of Ca(2+)-ATPase with a unique pentacyclic indole tetramic acid scaffold. This chain is MFS transporter cpaT, found in Aspergillus oryzae (Yellow koji mold).